A 209-amino-acid polypeptide reads, in one-letter code: Glycolipid transfer protein (209 aa).

The residue at position 2 (Ala-2) is an N-acetylalanine. 2 consecutive repeat copies span residues 45–55 (IKADISGNITK) and 56–66 (IKAVYDTDPAK). Positions 45-66 (IKADISGNITKIKAVYDTDPAK) are 2 X 12 AA approximate tandem repeats. 48–55 (DISGNITK) is a binding site for beta-D-galactosyl-(1-&gt;4)-beta-D-glucosyl-(1&lt;-&gt;1)-N-[(9Z)-octadecenoyl]-sphing-4-enine. 2 residues coordinate beta-D-galactosyl-(1-&gt;4)-beta-D-glucosyl-(1&lt;-&gt;1)-N-[(9Z)-octadecenoyl]-sphing-4-enine: His-140 and Tyr-207.

Belongs to the GLTP family. In terms of assembly, monomer.

Its subcellular location is the cytoplasm. Functionally, accelerates the intermembrane transfer of various glycolipids. Catalyzes the transfer of various glycosphingolipids between membranes but does not catalyze the transfer of phospholipids. May be involved in the intracellular translocation of glucosylceramides. This chain is Glycolipid transfer protein (Gltp), found in Mus musculus (Mouse).